Consider the following 116-residue polypeptide: Ribosome-binding factor A (116 aa).

It belongs to the RbfA family. As to quaternary structure, monomer. Binds 30S ribosomal subunits, but not 50S ribosomal subunits or 70S ribosomes.

It localises to the cytoplasm. Its function is as follows. One of several proteins that assist in the late maturation steps of the functional core of the 30S ribosomal subunit. Associates with free 30S ribosomal subunits (but not with 30S subunits that are part of 70S ribosomes or polysomes). Required for efficient processing of 16S rRNA. May interact with the 5'-terminal helix region of 16S rRNA. This chain is Ribosome-binding factor A, found in Clostridium perfringens (strain 13 / Type A).